Reading from the N-terminus, the 375-residue chain is MQSVTPTSQYLKALNEGSHQPDDVQKEAVSRLEIIYQELINSTPPAPRTSGLMARVGKLWGKREDTKHTPVRGLYMWGGVGRGKTWLMDLFYQSLPGERKQRLHFHRFMLRVHEELTALQGQTDPLEIIADRFKAETDVLCFDEFFVSDITDAMLLGGLMKALFARGITLVATSNIPPDELYRNGLQRARFLPAIDAIKQHCDVMNVDAGVDYRLRTLTQAHLWLSPLHDETRAQMDKLWLALAGGKRENSPTLEINHRPLATMGVENQTLAVSFTTLCVDARSQHDYIALSRLFHTVMLFDVPVMTRLMESEARRFIALVDEFYERHVKLVVSAEVPLYEIYQGDRLKFEFQRCLSRLQEMQSEEYLKREHLAG.

G78–T85 is an ATP binding site.

It belongs to the AFG1 ATPase family. ZapE subfamily. Interacts with FtsZ.

Its subcellular location is the cytoplasm. Its function is as follows. Reduces the stability of FtsZ polymers in the presence of ATP. The polypeptide is Cell division protein ZapE (Escherichia coli O157:H7).